Here is a 62-residue protein sequence, read N- to C-terminus: Amolopin-p-MT1 (62 aa).

An N-terminal signal peptide occupies residues 1–22 (MFTLKKSLLLLFFLGTISLSLC). Residues 23 to 42 (EQERGADEEENGGEVTEEEV) constitute a propeptide, removed in mature form.

Belongs to the frog skin active peptide (FSAP) family. Brevinin subfamily. As to expression, expressed by the skin glands.

Its subcellular location is the secreted. In terms of biological role, antimicrobial peptide. Active against a variety of Gram-negative and Gram-positive bacterial strains. Not active against fungi. Shows weak hemolytic activity against human erythrocytes. The sequence is that of Amolopin-p-MT1 from Amolops mantzorum (Sichuan torrent frog).